A 335-amino-acid chain; its full sequence is Ficolin-1 (335 aa).

Residues 1 to 17 (MWWPMLWAFPVLLCLCS) form the signal peptide. The tract at residues 47–114 (SCPSFPGPPG…TASPLGQKEL (68 aa)) is disordered. Residues 50 to 88 (SFPGPPGPKGEPGSPAGRGERGLQGSPGKMGPPGSKGEP) enclose the Collagen-like domain. The segment covering 75-88 (SPGKMGPPGSKGEP) has biased composition (low complexity). The Fibrinogen C-terminal domain maps to 117 to 335 (ALCRRGPRSC…KVAEMKIRAS (219 aa)). 2 disulfides stabilise this stretch: Cys119/Cys147 and Cys126/Cys154. An a domain; contributes to trimerization region spans residues 123–162 (PRSCKDLLTRGIFLTGWYTIYLPDCRPLTVLCDMDVDGGG). The b domain; contributes to trimerization stretch occupies residues 163 to 251 (WTVFQRRVDG…LTLGQFLEGT (89 aa)). Asp270 contributes to the Ca(2+) binding site. An N-linked (GlcNAc...) asparagine glycan is attached at Asn271. Residue Asp272 participates in Ca(2+) binding. Cysteines 279 and 292 form a disulfide. Position 291-293 (291-293 (DCH)) interacts with a carbohydrate. Residues 326-335 (KVAEMKIRAS) form a p domain region.

This sequence belongs to the ficolin lectin family. As to quaternary structure, homotrimer. Interacts with elastin/ELN. Interacts (via Fibrinogen C-terminal domain) with FFAR2. Interacts with CRP; may regulate monocyte activation by FCN1.

It localises to the secreted. Its subcellular location is the cell membrane. Extracellular lectin functioning as a pattern-recognition receptor in innate immunity. Binds the sugar moieties of pathogen-associated molecular patterns (PAMPs) displayed on microbes and activates the lectin pathway of the complement system. May also activate monocytes through a G protein-coupled receptor, FFAR2, inducing the secretion of interleukin-8/IL-8. Binds preferentially to 9-O-acetylated 2-6-linked sialic acid derivatives and to various glycans containing sialic acid engaged in a 2-3 linkage. The protein is Ficolin-1 (Fcn1) of Rattus norvegicus (Rat).